The sequence spans 513 residues: MSDKLIIFDTTLRDGEQSPGASMTKEEKIRIAKQLERLKVDVIEAGFAASSNGDFEAIRAIAQSVKDSRICSLARANDRDISRAAEALKPAGQFRIHTFIATSALHMEKKLRMTPDQVYEQARLAVRFARQFTDDIEFSPEDGSRSDMDFLCRVLEGVIAEGATTINLPDTVGYAVPEGYAALIRSVRERIPNSDKAIWSVHCHNDLGMAVANSLAAVKLGGARQIECTINGLGERAGNTSLEEVVMAVKTRRDYFNLDVGVDTTQIVPASKLVSQITGFVVQPNKAVVGANAFAHASGIHQDGVLKARDTYEIMRAEDVGWTANKIVLGKLSGRNAFKQRLQELGIELDSEAELNAAFTRFKELADQKAEIFDEDIVAIVSNEAQHAEGEHFRFVSLSQRSETGERPHARIVFVADGKEVTGEAEGNGPVDATLNAIESKVASGAEQLLYSVNAITTGTQAQGEVTVRLSKSGRIVNGVGTDPDIVAASAKAYLAALNKLQDKSSEKLNPQI.

The region spanning 5-268 (LIIFDTTLRD…DVGVDTTQIV (264 aa)) is the Pyruvate carboxyltransferase domain. Residues Asp14, His202, His204, and Asn239 each contribute to the Mn(2+) site. The regulatory domain stretch occupies residues 394-513 (RFVSLSQRSE…KSSEKLNPQI (120 aa)).

It belongs to the alpha-IPM synthase/homocitrate synthase family. LeuA type 1 subfamily. As to quaternary structure, homodimer. Requires Mn(2+) as cofactor.

It is found in the cytoplasm. The catalysed reaction is 3-methyl-2-oxobutanoate + acetyl-CoA + H2O = (2S)-2-isopropylmalate + CoA + H(+). It participates in amino-acid biosynthesis; L-leucine biosynthesis; L-leucine from 3-methyl-2-oxobutanoate: step 1/4. Its function is as follows. Catalyzes the condensation of the acetyl group of acetyl-CoA with 3-methyl-2-oxobutanoate (2-ketoisovalerate) to form 3-carboxy-3-hydroxy-4-methylpentanoate (2-isopropylmalate). The protein is 2-isopropylmalate synthase of Ralstonia nicotianae (strain ATCC BAA-1114 / GMI1000) (Ralstonia solanacearum).